The following is a 366-amino-acid chain: Di-N-acetylchitobiase (366 aa).

An N-terminal signal peptide occupies residues 1-22 (MALCGLPEFTLLLLPLLARLSA). The GH18 domain occupies 23–366 (GDCPCSEAAL…EMWGALKPRL (344 aa)). The active-site Proton donor is glutamate 127. Asparagine 131, asparagine 177, asparagine 212, asparagine 246, and asparagine 283 each carry an N-linked (GlcNAc...) asparagine glycan.

It belongs to the glycosyl hydrolase 18 family.

It is found in the lysosome. Involved in the degradation of asparagine-linked glycoproteins. Hydrolyze of N-acetyl-beta-D-glucosamine (1-4)N-acetylglucosamine chitobiose core from the reducing end of the bond, it requires prior cleavage by glycosylasparaginase. The chain is Di-N-acetylchitobiase (Ctbs) from Mus musculus (Mouse).